The primary structure comprises 468 residues: Fibrinogen beta chain (468 aa).

Q1 bears the Pyrrolidone carboxylic acid mark. A compositionally biased stretch (acidic residues) spans 1–10 (QFPTDYDEGQ). Positions 1–54 (QFPTDYDEGQDDRPKVGLGARGHRPYDKKKEEAPSLRPVPPPISGGGYRARPAT) are disordered. The O-linked (GalNAc...) threonine glycan is linked to T4. Y6 carries the post-translational modification Sulfotyrosine. The span at 24 to 34 (RPYDKKKEEAP) shows a compositional bias: basic and acidic residues. Residues 88-204 (KLQDTLVRQE…TQMEYCRTPC (117 aa)) are a coiled coil. 2 cysteine pairs are disulfide-bonded: C208–C293 and C218–C247. A Fibrinogen C-terminal domain is found at 209–465 (NIPVVSGKEC…KMSMKIRPYF (257 aa)). The N-linked (GlcNAc...) asparagine glycan is linked to N371. C401 and C414 form a disulfide bridge.

Heterohexamer; disulfide linked. Contains 2 sets of 3 non-identical chains (alpha, beta and gamma). The 2 heterotrimers are in head to head conformation with the N-termini in a small central domain. In terms of processing, conversion of fibrinogen to fibrin is triggered by thrombin, which cleaves fibrinopeptides A and B from alpha and beta chains, and thus exposes the N-terminal polymerization sites responsible for the formation of the soft clot. The soft clot is converted into the hard clot by factor XIIIA which catalyzes the epsilon-(gamma-glutamyl)lysine cross-linking between gamma chains (stronger) and between alpha chains (weaker) of different monomers. In terms of tissue distribution, detected in blood plasma (at protein level).

It is found in the secreted. Functionally, cleaved by the protease thrombin to yield monomers which, together with fibrinogen alpha (FGA) and fibrinogen gamma (FGG), polymerize to form an insoluble fibrin matrix. Fibrin has a major function in hemostasis as one of the primary components of blood clots. In addition, functions during the early stages of wound repair to stabilize the lesion and guide cell migration during re-epithelialization. Was originally thought to be essential for platelet aggregation, based on in vitro studies using anticoagulated blood. However subsequent studies have shown that it is not absolutely required for thrombus formation in vivo. Enhances expression of SELP in activated platelets. Maternal fibrinogen is essential for successful pregnancy. Fibrin deposition is also associated with infection, where it protects against IFNG-mediated hemorrhage. May also facilitate the antibacterial immune response via both innate and T-cell mediated pathways. The sequence is that of Fibrinogen beta chain (FGB) from Bos taurus (Bovine).